The following is a 37-amino-acid chain: Cytochrome b6-f complex subunit 5 (37 aa).

A helical membrane pass occupies residues 5–25 (LLSGIVLGLVPVTIAGLFVTA).

Belongs to the PetG family. In terms of assembly, the 4 large subunits of the cytochrome b6-f complex are cytochrome b6, subunit IV (17 kDa polypeptide, PetD), cytochrome f and the Rieske protein, while the 4 small subunits are PetG, PetL, PetM and PetN. The complex functions as a dimer.

The protein resides in the plastid. Its subcellular location is the chloroplast thylakoid membrane. Functionally, component of the cytochrome b6-f complex, which mediates electron transfer between photosystem II (PSII) and photosystem I (PSI), cyclic electron flow around PSI, and state transitions. PetG is required for either the stability or assembly of the cytochrome b6-f complex. This is Cytochrome b6-f complex subunit 5 from Chlorella vulgaris (Green alga).